Reading from the N-terminus, the 370-residue chain is Ubiquitin carboxyl-terminal hydrolase 12-B (370 aa).

Residues 39-369 (FGLVNFGNTC…SGYILFYQSR (331 aa)) enclose the USP domain. The active-site Nucleophile is cysteine 48. A disordered region spans residues 145 to 168 (KQEKQNGRIPNGNIDNENNNNTPD). Positions 155-165 (NGNIDNENNNN) are enriched in low complexity. Residues cysteine 186, cysteine 189, cysteine 233, and cysteine 236 each coordinate Zn(2+). The Proton acceptor role is filled by histidine 317.

The protein belongs to the peptidase C19 family. USP12/USP46 subfamily. Interacts with WDR48.

It carries out the reaction Thiol-dependent hydrolysis of ester, thioester, amide, peptide and isopeptide bonds formed by the C-terminal Gly of ubiquitin (a 76-residue protein attached to proteins as an intracellular targeting signal).. In terms of biological role, deubiquitinating enzyme. Has almost no deubiquitinating activity by itself and requires the interaction with wdr48 to have a high activity. The sequence is that of Ubiquitin carboxyl-terminal hydrolase 12-B (usp12-b) from Xenopus laevis (African clawed frog).